The sequence spans 158 residues: Pathogenesis-related protein 1 (158 aa).

Belongs to the BetVI family.

Its subcellular location is the cytoplasm. This is Pathogenesis-related protein 1 (PR1) from Asparagus officinalis (Garden asparagus).